The following is a 202-amino-acid chain: FMN-dependent NADH:quinone oxidoreductase 2 (202 aa).

FMN-binding positions include serine 9, serine 15 to serine 17, methionine 95 to phenylalanine 98, and threonine 139 to glycine 142.

It belongs to the azoreductase type 1 family. As to quaternary structure, homodimer. The cofactor is FMN.

The catalysed reaction is 2 a quinone + NADH + H(+) = 2 a 1,4-benzosemiquinone + NAD(+). It catalyses the reaction N,N-dimethyl-1,4-phenylenediamine + anthranilate + 2 NAD(+) = 2-(4-dimethylaminophenyl)diazenylbenzoate + 2 NADH + 2 H(+). Quinone reductase that provides resistance to thiol-specific stress caused by electrophilic quinones. Reduces both benzoquinones and naphthoquinones efficiently. Functionally, also exhibits azoreductase activity. Catalyzes the reductive cleavage of the azo bond in aromatic azo compounds to the corresponding amines. Preferred substrates are the large bis-azo dye Ponceau BS, amaranth and tropaeolin O. The sequence is that of FMN-dependent NADH:quinone oxidoreductase 2 from Pseudomonas aeruginosa (strain ATCC 15692 / DSM 22644 / CIP 104116 / JCM 14847 / LMG 12228 / 1C / PRS 101 / PAO1).